The primary structure comprises 687 residues: Polyphosphate kinase (687 aa).

An ATP-binding site is contributed by Asn45. Residues Arg373 and Arg403 each contribute to the Mg(2+) site. His433 functions as the Phosphohistidine intermediate in the catalytic mechanism. ATP is bound by residues Tyr466, Arg562, and His590. Residues Asp585–Asn615 enclose the PLD phosphodiesterase domain.

Belongs to the polyphosphate kinase 1 (PPK1) family. Requires Mg(2+) as cofactor. An intermediate of this reaction is the autophosphorylated ppk in which a phosphate is covalently linked to a histidine residue through a N-P bond.

It catalyses the reaction [phosphate](n) + ATP = [phosphate](n+1) + ADP. Catalyzes the reversible transfer of the terminal phosphate of ATP to form a long-chain polyphosphate (polyP). This is Polyphosphate kinase from Yersinia pestis.